The chain runs to 249 residues: 3-deoxy-manno-octulosonate cytidylyltransferase (249 aa).

It belongs to the KdsB family.

It is found in the cytoplasm. The catalysed reaction is 3-deoxy-alpha-D-manno-oct-2-ulosonate + CTP = CMP-3-deoxy-beta-D-manno-octulosonate + diphosphate. Its pathway is nucleotide-sugar biosynthesis; CMP-3-deoxy-D-manno-octulosonate biosynthesis; CMP-3-deoxy-D-manno-octulosonate from 3-deoxy-D-manno-octulosonate and CTP: step 1/1. The protein operates within bacterial outer membrane biogenesis; lipopolysaccharide biosynthesis. Activates KDO (a required 8-carbon sugar) for incorporation into bacterial lipopolysaccharide in Gram-negative bacteria. The chain is 3-deoxy-manno-octulosonate cytidylyltransferase from Aliivibrio fischeri (strain ATCC 700601 / ES114) (Vibrio fischeri).